The following is a 269-amino-acid chain: Glutamate racemase (269 aa).

Substrate contacts are provided by residues 14-15 (DS) and 46-47 (YS). The Proton donor/acceptor role is filled by Cys-78. 79-80 (NT) contributes to the substrate binding site. Residue Cys-189 is the Proton donor/acceptor of the active site. 190–191 (TH) is a substrate binding site.

This sequence belongs to the aspartate/glutamate racemases family.

It catalyses the reaction L-glutamate = D-glutamate. The protein operates within cell wall biogenesis; peptidoglycan biosynthesis. Functionally, provides the (R)-glutamate required for cell wall biosynthesis. The protein is Glutamate racemase of Haemophilus influenzae (strain PittGG).